The sequence spans 585 residues: Ras-specific guanine nucleotide-releasing factor RalGPS1 (585 aa).

The Ras-GEF domain occupies 50–289 (TPEEFASQIT…YKLSLRIEPG (240 aa)). Disordered stretches follow at residues 289-342 (GSSS…KSHS) and 378-410 (RSPR…SEEM). The segment covering 303–312 (AGPSAGSSSA) has biased composition (low complexity). The PXXP motif lies at 330–333 (PTPP). A compositionally biased stretch (polar residues) spans 385 to 396 (THTSSTAITNGL). Positions 459-571 (VPTMEGPLRR…WHKHLDDACK (113 aa)) constitute a PH domain. The segment at 461–585 (TMEGPLRRKT…QVPANLMSFE (125 aa)) is required for stimulation of nucleotide exchange by RALA.

As to quaternary structure, interacts with the SH3 domains of GRB2, NCK1, PLCG1 and SRC.

It is found in the cytoplasm. It localises to the cell membrane. Functionally, guanine nucleotide exchange factor for the small GTPase RALA. May be involved in cytoskeleton organization. The chain is Ras-specific guanine nucleotide-releasing factor RalGPS1 (Ralgps1) from Mus musculus (Mouse).